The following is a 359-amino-acid chain: GTPase Obg (359 aa).

The Obg domain occupies 1–159 (MQFIDQAEIQ…RSLRLELKLL (159 aa)). Residues 160–328 (AEVGIIGLPN…LLHQIWQELE (169 aa)) enclose the OBG-type G domain. Residues 166 to 173 (GLPNAGKS), 191 to 195 (FTTLV), 213 to 216 (DIPG), 280 to 283 (NKID), and 309 to 311 (SAI) each bind GTP. Mg(2+) contacts are provided by serine 173 and threonine 193.

It belongs to the TRAFAC class OBG-HflX-like GTPase superfamily. OBG GTPase family. As to quaternary structure, monomer. The cofactor is Mg(2+).

It localises to the cytoplasm. In terms of biological role, an essential GTPase which binds GTP, GDP and possibly (p)ppGpp with moderate affinity, with high nucleotide exchange rates and a fairly low GTP hydrolysis rate. Plays a role in control of the cell cycle, stress response, ribosome biogenesis and in those bacteria that undergo differentiation, in morphogenesis control. The polypeptide is GTPase Obg (Cyanothece sp. (strain PCC 7425 / ATCC 29141)).